The sequence spans 266 residues: Thymidylate synthase (266 aa).

R24 is a binding site for dUMP. (6R)-5,10-methylene-5,6,7,8-tetrahydrofolate is bound at residue H54. Residue 129-130 participates in dUMP binding; the sequence is RR. Catalysis depends on C149, which acts as the Nucleophile. DUMP contacts are provided by residues 169 to 172, N180, and 210 to 212; these read RSAD and HIY. D172 is a (6R)-5,10-methylene-5,6,7,8-tetrahydrofolate binding site. A265 lines the (6R)-5,10-methylene-5,6,7,8-tetrahydrofolate pocket.

The protein belongs to the thymidylate synthase family. Bacterial-type ThyA subfamily. As to quaternary structure, homodimer.

Its subcellular location is the cytoplasm. The catalysed reaction is dUMP + (6R)-5,10-methylene-5,6,7,8-tetrahydrofolate = 7,8-dihydrofolate + dTMP. It functions in the pathway pyrimidine metabolism; dTTP biosynthesis. Its function is as follows. Catalyzes the reductive methylation of 2'-deoxyuridine-5'-monophosphate (dUMP) to 2'-deoxythymidine-5'-monophosphate (dTMP) while utilizing 5,10-methylenetetrahydrofolate (mTHF) as the methyl donor and reductant in the reaction, yielding dihydrofolate (DHF) as a by-product. This enzymatic reaction provides an intracellular de novo source of dTMP, an essential precursor for DNA biosynthesis. The polypeptide is Thymidylate synthase (Mycobacterium ulcerans (strain Agy99)).